We begin with the raw amino-acid sequence, 302 residues long: Surfeit locus protein 4 homolog (302 aa).

The next 6 membrane-spanning stretches (helical) occupy residues 95–115 (APLL…LVVF), 120–140 (AYAI…YGLI), 193–213 (VLLI…ISWT), 215–235 (ILVH…FKAK), 236–256 (FFAA…NSFW), and 271–291 (DFFQ…TGPG). The short motif at 299–302 (KKIY) is the Di-lysine motif element.

This sequence belongs to the SURF4 family.

The protein resides in the endoplasmic reticulum membrane. The polypeptide is Surfeit locus protein 4 homolog (Schizosaccharomyces pombe (strain 972 / ATCC 24843) (Fission yeast)).